A 142-amino-acid chain; its full sequence is Small ribosomal subunit protein uS12 (142 aa).

The segment at Met1–Pro22 is disordered. Residues Arg9–Ser19 show a composition bias toward basic residues. Residue Asp102 is modified to 3-methylthioaspartic acid.

Belongs to the universal ribosomal protein uS12 family. In terms of assembly, part of the 30S ribosomal subunit. Contacts proteins S8 and S17. May interact with IF1 in the 30S initiation complex.

Its function is as follows. With S4 and S5 plays an important role in translational accuracy. Functionally, interacts with and stabilizes bases of the 16S rRNA that are involved in tRNA selection in the A site and with the mRNA backbone. Located at the interface of the 30S and 50S subunits, it traverses the body of the 30S subunit contacting proteins on the other side and probably holding the rRNA structure together. The combined cluster of proteins S8, S12 and S17 appears to hold together the shoulder and platform of the 30S subunit. In Acetivibrio thermocellus (strain ATCC 27405 / DSM 1237 / JCM 9322 / NBRC 103400 / NCIMB 10682 / NRRL B-4536 / VPI 7372) (Clostridium thermocellum), this protein is Small ribosomal subunit protein uS12.